The following is a 336-amino-acid chain: Fructose-1,6-bisphosphatase class 1 (336 aa).

Positions 90, 112, 114, and 115 each coordinate Mg(2+). Substrate-binding positions include 115–118, Asn-211, and Lys-277; that span reads DGSS. Glu-283 serves as a coordination point for Mg(2+).

The protein belongs to the FBPase class 1 family. As to quaternary structure, homotetramer. The cofactor is Mg(2+).

It is found in the cytoplasm. The catalysed reaction is beta-D-fructose 1,6-bisphosphate + H2O = beta-D-fructose 6-phosphate + phosphate. It participates in carbohydrate biosynthesis; gluconeogenesis. This Stutzerimonas stutzeri (strain A1501) (Pseudomonas stutzeri) protein is Fructose-1,6-bisphosphatase class 1.